A 23-amino-acid chain; its full sequence is Hemocyanin subunit 1 (23 aa).

A disordered region spans residues 1–23 (DSPGGASDTQKQHXVNSXXXKXY).

Belongs to the tyrosinase family. Hemocyanin subfamily. Hemolymph.

The protein localises to the secreted. Its subcellular location is the extracellular space. Functionally, hemocyanins are copper-containing oxygen carriers occurring freely dissolved in the hemolymph of many mollusks and arthropods. The polypeptide is Hemocyanin subunit 1 (Cancer pagurus (Rock crab)).